Here is a 100-residue protein sequence, read N- to C-terminus: Carboxysome shell vertex protein CcmL (100 aa).

The BMV domain occupies 1–83 (MQLAKVLGTV…LDAMVVGIID (83 aa)).

It belongs to the CcmL/EutN family. CcmL subfamily. In terms of assembly, homopentamer. Interacts with full-length CcmM.

The protein resides in the carboxysome. Functionally, probably forms vertices in the carboxysome, a polyhedral inclusion where RuBisCO (ribulose bisphosphate carboxylase, rbcL-rbcS) is sequestered. Has been modeled to induce curvature upon insertion into an otherwise flat hexagonal molecular layer of CcmK subunits. The protein is Carboxysome shell vertex protein CcmL of Synechocystis sp. (strain ATCC 27184 / PCC 6803 / Kazusa).